Reading from the N-terminus, the 244-residue chain is MSAAAYMDFVAAQCLVSISNRAAVPEHGGAPDAERLRLPEREVTKEHGDPGDTWKDYCTLVTIAKSLLDLNKYRPIQTPSVCSDSLESPDEDMGSDSDVTTESGSSPSHSPEERQDPGSAPSPLSLLHPGVAAKGKHASEKRHKCPYSGCGKVYGKSSHLKAHYRVHTGERPFPCTWPDCLKKFSRSDELTRHYRTHTGEKQFRCPLCEKRFMRSDHLTKHARRHTEFHPSMIKRSKKALANPL.

Disordered regions lie at residues Val24 to Gly51 and Ser80 to Arg142. Residues Asp32–Gly51 show a composition bias toward basic and acidic residues. Residue Ser122 is modified to Phosphoserine. 3 consecutive C2H2-type zinc fingers follow at residues His143–His167, Phe173–His197, and Phe203–His225.

The protein belongs to the Sp1 C2H2-type zinc-finger protein family. As to quaternary structure, interacts with ZZEF1.

The protein localises to the nucleus. In terms of biological role, transcription factor that binds to GC box promoter elements. Selectively activates mRNA synthesis from genes containing tandem repeats of GC boxes but represses genes with a single GC box. Acts as an epidermal circadian transcription factor regulating keratinocyte proliferation. This is Krueppel-like factor 9 (KLF9) from Sus scrofa (Pig).